Reading from the N-terminus, the 582-residue chain is Solute carrier family 15 member 3 (582 aa).

Residues 1–20 are disordered; sequence MSALRAEQQPSRSGERQPLV. 4 helical membrane-spanning segments follow: residues 33 to 53, 77 to 97, 102 to 122, and 155 to 175; these read TAAA…FGVT, LLFL…ADVY, LAIS…LTTI, and PYCA…ASSV. N178 carries an N-linked (GlcNAc...) asparagine glycan. The chain crosses the membrane as a helical span at residues 201–221; sequence WFYWSINLGAILSLLVVAFIE. Residue N223 is glycosylated (N-linked (GlcNAc...) asparagine). A run of 2 helical transmembrane segments spans residues 232 to 252 and 312 to 332; these read IIVG…PVFI and FQVL…WMVY. N357 carries an N-linked (GlcNAc...) asparagine glycan. 2 helical membrane-spanning segments follow: residues 371–391 and 409–429; these read IPEA…VPVK and LQKM…AGVL. A glycan (N-linked (GlcNAc...) asparagine) is linked at N440. The next 3 helical transmembrane spans lie at 466–485, 498–518, and 541–561; these read YLLI…EFAY, GIFF…VALL, and LYFF…LWIA. N-linked (GlcNAc...) asparagine glycosylation is present at N575.

It belongs to the major facilitator superfamily. Proton-dependent oligopeptide transporter (POT/PTR) (TC 2.A.17) family. As to expression, abundant expression in lung, spleen and thymus, and detected faintly in brain, liver, adrenal gland and heart at protein level.

Its subcellular location is the lysosome membrane. The protein resides in the endosome membrane. The catalysed reaction is N-acetyl-D-muramoyl-L-alanyl-D-isoglutamine(out) + n H(+)(out) = N-acetyl-D-muramoyl-L-alanyl-D-isoglutamine(in) + n H(+)(in). It carries out the reaction glycylglycylglycine(out) + n H(+)(out) = glycylglycylglycine(in) + n H(+)(in). It catalyses the reaction carnosine(out) + n H(+)(out) = carnosine(in) + n H(+)(in). The enzyme catalyses L-histidine(out) + n H(+)(out) = L-histidine(in) + n H(+)(in). Its function is as follows. Proton-coupled amino-acid transporter that transports free histidine and certain di- and tripeptides, and is involved in innate immune response. Also able to transport carnosine. Involved in the detection of microbial pathogens by toll-like receptors (TLRs) and NOD-like receptors (NLRs), probably by mediating transport of bacterial peptidoglycans across the endolysosomal membrane: catalyzes the transport of certain bacterial peptidoglycans, such as muramyl dipeptide (MDP), the NOD2 ligand. The polypeptide is Solute carrier family 15 member 3 (Slc15a3) (Rattus norvegicus (Rat)).